The sequence spans 448 residues: UDP-N-acetylmuramoylalanine--D-glutamate ligase (448 aa).

112 to 118 contributes to the ATP binding site; it reads GSNAKST.

It belongs to the MurCDEF family.

The protein localises to the cytoplasm. It catalyses the reaction UDP-N-acetyl-alpha-D-muramoyl-L-alanine + D-glutamate + ATP = UDP-N-acetyl-alpha-D-muramoyl-L-alanyl-D-glutamate + ADP + phosphate + H(+). It participates in cell wall biogenesis; peptidoglycan biosynthesis. Functionally, cell wall formation. Catalyzes the addition of glutamate to the nucleotide precursor UDP-N-acetylmuramoyl-L-alanine (UMA). This Acinetobacter baumannii (strain AB307-0294) protein is UDP-N-acetylmuramoylalanine--D-glutamate ligase.